A 319-amino-acid polypeptide reads, in one-letter code: Acetyl esterase (319 aa).

The short motif at 91-93 is the Involved in the stabilization of the negatively charged intermediate by the formation of the oxyanion hole element; it reads HGG. Active-site residues include Ser-165, Asp-262, and His-292.

This sequence belongs to the 'GDXG' lipolytic enzyme family. As to quaternary structure, homodimer. Interacts with MalT and MelA.

The protein localises to the cytoplasm. Displays esterase activity towards short chain fatty esters (acyl chain length of up to 8 carbons). Able to hydrolyze triacetylglycerol (triacetin) and tributyrylglycerol (tributyrin), but not trioleylglycerol (triolein) or cholesterol oleate. Negatively regulates MalT activity by antagonizing maltotriose binding. Inhibits MelA galactosidase activity. The polypeptide is Acetyl esterase (Shigella boydii serotype 4 (strain Sb227)).